Reading from the N-terminus, the 135-residue chain is Large ribosomal subunit protein bL19 (135 aa).

It belongs to the bacterial ribosomal protein bL19 family.

In terms of biological role, this protein is located at the 30S-50S ribosomal subunit interface and may play a role in the structure and function of the aminoacyl-tRNA binding site. The protein is Large ribosomal subunit protein bL19 of Protochlamydia amoebophila (strain UWE25).